Reading from the N-terminus, the 150-residue chain is Small ribosomal subunit protein uS15 (150 aa).

Positions 1–10 (MPHRSRHKRG) are enriched in basic residues. The interval 1-21 (MPHRSRHKRGSSGSVRPATKT) is disordered.

This sequence belongs to the universal ribosomal protein uS15 family. In terms of assembly, part of the 30S ribosomal subunit.

The protein is Small ribosomal subunit protein uS15 of Caldivirga maquilingensis (strain ATCC 700844 / DSM 13496 / JCM 10307 / IC-167).